The sequence spans 407 residues: MATTKTGSLTIAGSGIASVAHITLEVLSYLQEADKIYYAIVDPVTEAFIQDKSKGRCFDLRVYYDKDKMRSETYVQMSEVMLRDVRSGYNVLAIFYGHPGVFVCPTHRAISIARSEGYTAKMLPGVSAEDYMFSDIGFDPAVPGCMTQEATSLLIYNKQLDPSVHNIIWQVGSVGVDNMVFDNKQFHLLVDHLERDFGSIHKVIHYVGAIMPQSATVMDEYTISDLRKEDVVKKFTTTSTLYIPPREIAPVDQRIMQALEFSGNGDRYMALSQLRGVHARNSGLCAYGPAEQAAVDKLDHHTPPDDYEVLRASPAIRRFTEDLALKPDLRSRYKEDPLSVLDAIPGLTSQEKFALSFDKPGPVYKVMRATPAAIAAGQEHSLDEIAGSADSESPGALATTIVVIVHI.

Residues 1 to 246 are methyltransferase domain; sequence MATTKTGSLT…TTSTLYIPPR (246 aa). Active-site residues include Arg70, Tyr74, and Tyr96. Tyr96, His98, Val101, Ala128, Gln170, Gly208, Ser239, and Thr240 together coordinate S-adenosyl-L-methionine. The clasp domain stretch occupies residues 247–370; it reads EIAPVDQRIM…GPVYKVMRAT (124 aa). Residues 371–393 are precursor leader; that stretch reads PAAIAAGQEHSLDEIAGSADSES. N-methylthreonine occurs at positions 399 and 400. Position 401 is an N-methylisoleucine (Ile401). An N-methylvaline mark is found at Val402 and Val403. An N-methylisoleucine modification is found at Ile404. Val405 carries the post-translational modification N-methylvaline. Residue His406 is modified to N-methylhistidine.

In the N-terminal section; belongs to the precorrin methyltransferase family. Homodimer. In terms of processing, ceuMA2 automethylates at Thr-399, Thr-400, Ile-401, Val-402, Val-403, Ile-404, Val-405 and His-406 before being processed by a prolyloligopeptidase which likely forms a peptidyl ester upon removal of the follower propeptide, which then undergoes macrocyclization with the N-terminus of the modified core peptide. Peptide backbone alpha-N-methylations change the physicochemical properties of amide bonds to provide structural constraints and other favorable characteristics including biological membrane permeability to peptides.

It participates in secondary metabolite biosynthesis. In terms of biological role, fusion protein of the methyltransferase ceuM2 and a type I borosin core peptide; part of the gene cluster that mediates the biosynthesis of a type I borosin, a highly methylated cyclic peptide with potent biological activities. Type I borosins derive from the C-terminus of the fusion protein, and it is the same protein that methylates its own C-terminus using S-adenosyl methionine (SAM). The C-terminus is subsequently cleaved off and macrocyclized by a prolyloligopeptidase to give the final product. The protein is Methyltransferase/ribosomally synthesized type I borosin cyclic peptide precursor ceuMA2 of Cerrena unicolor (Canker rot fungus).